A 218-amino-acid polypeptide reads, in one-letter code: Small ribosomal subunit protein uS3c (218 aa).

A KH type-2 domain is found at 39-118 (IRNFIKNYVQ…KLNIAITRIA (80 aa)).

The protein belongs to the universal ribosomal protein uS3 family. Part of the 30S ribosomal subunit.

The protein resides in the plastid. The protein localises to the chloroplast. The sequence is that of Small ribosomal subunit protein uS3c (rps3) from Ipomoea purpurea (Common morning glory).